The primary structure comprises 503 residues: Lactation elevated protein 1 homolog B (503 aa).

The disordered stretch occupies residues 108–155; sequence LQNQPTSELQDKVGSRETVNICRPDENVSNEKEDQQEESSKPHPPQGY. Positions 130 to 148 are enriched in basic and acidic residues; the sequence is RPDENVSNEKEDQQEESSK. Position 159–166 (159–166) interacts with ATP; the sequence is GNVGTGKT.

It belongs to the AFG1 ATPase family.

The chain is Lactation elevated protein 1 homolog B (lace1b) from Danio rerio (Zebrafish).